The following is a 293-amino-acid chain: Glycine--tRNA ligase alpha subunit (293 aa).

The protein belongs to the class-II aminoacyl-tRNA synthetase family. In terms of assembly, tetramer of two alpha and two beta subunits.

It is found in the cytoplasm. It carries out the reaction tRNA(Gly) + glycine + ATP = glycyl-tRNA(Gly) + AMP + diphosphate. This is Glycine--tRNA ligase alpha subunit from Picosynechococcus sp. (strain ATCC 27264 / PCC 7002 / PR-6) (Agmenellum quadruplicatum).